Reading from the N-terminus, the 488-residue chain is UDP-N-acetylmuramate--L-alanine ligase (488 aa).

127-133 (GTHGKTT) contacts ATP.

It belongs to the MurCDEF family.

It localises to the cytoplasm. The catalysed reaction is UDP-N-acetyl-alpha-D-muramate + L-alanine + ATP = UDP-N-acetyl-alpha-D-muramoyl-L-alanine + ADP + phosphate + H(+). The protein operates within cell wall biogenesis; peptidoglycan biosynthesis. In terms of biological role, cell wall formation. This Shewanella putrefaciens (strain CN-32 / ATCC BAA-453) protein is UDP-N-acetylmuramate--L-alanine ligase.